The following is a 409-amino-acid chain: Elongation factor Tu, chloroplastic (409 aa).

The tr-type G domain maps to 10-214; the sequence is KPHVNIGTIG…TVDAYIPTPE (205 aa). Residues 19 to 26 are G1; that stretch reads GHVDHGKT. 19–26 provides a ligand contact to GTP; sequence GHVDHGKT. Position 26 (Thr26) interacts with Mg(2+). The interval 60–64 is G2; it reads GITIN. The tract at residues 81 to 84 is G3; it reads DCPG. GTP contacts are provided by residues 81 to 85 and 136 to 139; these read DCPGH and NKED. The tract at residues 136 to 139 is G4; the sequence is NKED. Residues 174–176 are G5; sequence SAL.

It belongs to the TRAFAC class translation factor GTPase superfamily. Classic translation factor GTPase family. EF-Tu/EF-1A subfamily.

The protein localises to the plastid. The protein resides in the chloroplast. The catalysed reaction is GTP + H2O = GDP + phosphate + H(+). GTP hydrolase that promotes the GTP-dependent binding of aminoacyl-tRNA to the A-site of ribosomes during protein biosynthesis. This is Elongation factor Tu, chloroplastic (tufA) from Pleurastrum terricola (Filamentous green alga).